The chain runs to 227 residues: Germin-like protein subfamily 1 member 6 (227 aa).

The signal sequence occupies residues 1 to 25; that stretch reads MMEVLLRLLVTQVILLALATSFVSC. An intrachain disulfide couples Cys-35 to Cys-51. The region spanning 65–216 is the Cupin type-1 domain; that stretch reads SGLNIARNTT…AFQLDVKLVR (152 aa). N-linked (GlcNAc...) asparagine glycosylation is found at Asn-72 and Asn-80. Residues His-113, His-115, Glu-120, and His-162 each contribute to the Mn(2+) site.

It belongs to the germin family. Oligomer (believed to be a pentamer but probably hexamer).

Its subcellular location is the secreted. It is found in the extracellular space. The protein resides in the apoplast. In terms of biological role, may play a role in plant defense. Probably has no oxalate oxidase activity even if the active site is conserved. The protein is Germin-like protein subfamily 1 member 6 of Arabidopsis thaliana (Mouse-ear cress).